The sequence spans 385 residues: Meiotic recombination protein SPO11-2 (385 aa).

The Topo IIA-type catalytic domain occupies 24-169 (LPPAEVRARI…LGIMASSRGA (146 aa)). Y126 acts as the O-(5'-phospho-DNA)-tyrosine intermediate in catalysis. The Mg(2+) site is built by E219 and D272.

Belongs to the TOP6A family. Interacts with TOP6B. Mg(2+) is required as a cofactor.

Its subcellular location is the nucleus. It carries out the reaction ATP-dependent breakage, passage and rejoining of double-stranded DNA.. Required for meiotic recombination. Mediates DNA cleavage that forms the double-strand breaks (DSB) that initiate meiotic recombination. The chain is Meiotic recombination protein SPO11-2 (SPO11-2) from Oryza sativa subsp. japonica (Rice).